The primary structure comprises 564 residues: Proline--tRNA ligase (564 aa).

Belongs to the class-II aminoacyl-tRNA synthetase family. ProS type 1 subfamily. As to quaternary structure, homodimer.

Its subcellular location is the cytoplasm. The catalysed reaction is tRNA(Pro) + L-proline + ATP = L-prolyl-tRNA(Pro) + AMP + diphosphate. Catalyzes the attachment of proline to tRNA(Pro) in a two-step reaction: proline is first activated by ATP to form Pro-AMP and then transferred to the acceptor end of tRNA(Pro). As ProRS can inadvertently accommodate and process non-cognate amino acids such as alanine and cysteine, to avoid such errors it has two additional distinct editing activities against alanine. One activity is designated as 'pretransfer' editing and involves the tRNA(Pro)-independent hydrolysis of activated Ala-AMP. The other activity is designated 'posttransfer' editing and involves deacylation of mischarged Ala-tRNA(Pro). The misacylated Cys-tRNA(Pro) is not edited by ProRS. The polypeptide is Proline--tRNA ligase (Bacillus velezensis (strain DSM 23117 / BGSC 10A6 / LMG 26770 / FZB42) (Bacillus amyloliquefaciens subsp. plantarum)).